Consider the following 393-residue polypeptide: Formate-dependent phosphoribosylglycinamide formyltransferase (393 aa).

Residues 22-23 and E82 each bind N(1)-(5-phospho-beta-D-ribosyl)glycinamide; that span reads EL. ATP-binding positions include R114, K155, 160–165, 195–198, and E203; these read SSGHGQ and EGFI. One can recognise an ATP-grasp domain in the interval 119–308; sequence RLAAEELGLK…QFALHARAIL (190 aa). Residues E267 and E279 each contribute to the Mg(2+) site. N(1)-(5-phospho-beta-D-ribosyl)glycinamide-binding positions include D286, K356, and 363–364; that span reads RR.

This sequence belongs to the PurK/PurT family. Homodimer.

It carries out the reaction N(1)-(5-phospho-beta-D-ribosyl)glycinamide + formate + ATP = N(2)-formyl-N(1)-(5-phospho-beta-D-ribosyl)glycinamide + ADP + phosphate + H(+). It functions in the pathway purine metabolism; IMP biosynthesis via de novo pathway; N(2)-formyl-N(1)-(5-phospho-D-ribosyl)glycinamide from N(1)-(5-phospho-D-ribosyl)glycinamide (formate route): step 1/1. Its function is as follows. Involved in the de novo purine biosynthesis. Catalyzes the transfer of formate to 5-phospho-ribosyl-glycinamide (GAR), producing 5-phospho-ribosyl-N-formylglycinamide (FGAR). Formate is provided by PurU via hydrolysis of 10-formyl-tetrahydrofolate. The protein is Formate-dependent phosphoribosylglycinamide formyltransferase of Actinobacillus pleuropneumoniae serotype 5b (strain L20).